The sequence spans 123 residues: DNA-directed RNA polymerase subunit omega (123 aa).

The tract at residues 72–100 (QRVLPSEDEEDAAREERGQQMEALPAPPV) is disordered.

The protein belongs to the RNA polymerase subunit omega family. As to quaternary structure, the RNAP catalytic core consists of 2 alpha, 1 beta, 1 beta' and 1 omega subunit. When a sigma factor is associated with the core the holoenzyme is formed, which can initiate transcription.

It catalyses the reaction RNA(n) + a ribonucleoside 5'-triphosphate = RNA(n+1) + diphosphate. Promotes RNA polymerase assembly. Latches the N- and C-terminal regions of the beta' subunit thereby facilitating its interaction with the beta and alpha subunits. The polypeptide is DNA-directed RNA polymerase subunit omega (Maricaulis maris (strain MCS10) (Caulobacter maris)).